A 205-amino-acid polypeptide reads, in one-letter code: ATP synthase subunit b 1 (205 aa).

A compositionally biased stretch (polar residues) spans 1-15 (MFVSTAFAQTATESQ). Positions 1 to 26 (MFVSTAFAQTATESQPAPAAGEHGAA) are disordered. Residues 16–26 (PAPAAGEHGAA) are compositionally biased toward low complexity. A helical membrane pass occupies residues 56–78 (SQILWLAITFGLFYLFMSRVVLP).

This sequence belongs to the ATPase B chain family. As to quaternary structure, F-type ATPases have 2 components, F(1) - the catalytic core - and F(0) - the membrane proton channel. F(1) has five subunits: alpha(3), beta(3), gamma(1), delta(1), epsilon(1). F(0) has three main subunits: a(1), b(2) and c(10-14). The alpha and beta chains form an alternating ring which encloses part of the gamma chain. F(1) is attached to F(0) by a central stalk formed by the gamma and epsilon chains, while a peripheral stalk is formed by the delta and b chains.

The protein resides in the cell inner membrane. Functionally, f(1)F(0) ATP synthase produces ATP from ADP in the presence of a proton or sodium gradient. F-type ATPases consist of two structural domains, F(1) containing the extramembraneous catalytic core and F(0) containing the membrane proton channel, linked together by a central stalk and a peripheral stalk. During catalysis, ATP synthesis in the catalytic domain of F(1) is coupled via a rotary mechanism of the central stalk subunits to proton translocation. Its function is as follows. Component of the F(0) channel, it forms part of the peripheral stalk, linking F(1) to F(0). The polypeptide is ATP synthase subunit b 1 (Brucella anthropi (strain ATCC 49188 / DSM 6882 / CCUG 24695 / JCM 21032 / LMG 3331 / NBRC 15819 / NCTC 12168 / Alc 37) (Ochrobactrum anthropi)).